The sequence spans 129 residues: Small ribosomal subunit protein uS11 (129 aa).

Belongs to the universal ribosomal protein uS11 family. In terms of assembly, part of the 30S ribosomal subunit. Interacts with proteins S7 and S18. Binds to IF-3.

Its function is as follows. Located on the platform of the 30S subunit, it bridges several disparate RNA helices of the 16S rRNA. Forms part of the Shine-Dalgarno cleft in the 70S ribosome. In Hyphomonas neptunium (strain ATCC 15444), this protein is Small ribosomal subunit protein uS11.